Here is a 166-residue protein sequence, read N- to C-terminus: Putative universal stress protein SA1532 (166 aa).

Belongs to the universal stress protein A family.

The protein localises to the cytoplasm. This Staphylococcus aureus (strain N315) protein is Putative universal stress protein SA1532.